Here is a 59-residue protein sequence, read N- to C-terminus: Cecropin-C (59 aa).

The signal sequence occupies residues 1–23 (MNFKLIFLVALVLMAAFLGQTEG). Valine 58 carries the valine amide modification.

This sequence belongs to the cecropin family.

It localises to the secreted. In terms of biological role, cecropins have lytic and antibacterial activity against several Gram-positive and Gram-negative bacteria. The chain is Cecropin-C (CecC) from Anopheles gambiae (African malaria mosquito).